Here is a 223-residue protein sequence, read N- to C-terminus: Noggin (223 aa).

The N-terminal stretch at 1–26 is a signal peptide; sequence MDHSQCLVTIYAAAVLLGLRLQQGSC. N61 carries an N-linked (GlcNAc...) asparagine glycan. 4 disulfide bridges follow: C146/C183, C169/C219, C175/C221, and C198/C206.

Belongs to the noggin family. As to quaternary structure, homodimer.

It is found in the secreted. Its function is as follows. Inhibitor of bone morphogenetic proteins (BMP) signaling. Controls somitogenesis by sequestering the BMP-4 activity which in turn differentiates distinct subtypes of the mesoderm along the mediolateral axis. In Gallus gallus (Chicken), this protein is Noggin (NOG).